The following is a 353-amino-acid chain: Phospho-N-acetylmuramoyl-pentapeptide-transferase (353 aa).

A run of 10 helical transmembrane segments spans residues 24-44 (LGFF…ILWA), 66-86 (TPTM…VLCA), 88-108 (LGNL…FVGF), 129-149 (FGML…KGLD), 160-180 (PLFE…FLST), 192-212 (GLAS…VYVA), 229-249 (VGEL…FLWY), 256-276 (VFMG…NAIV), 281-301 (ILLV…ILQV), and 330-350 (KVIV…LLSL).

Belongs to the glycosyltransferase 4 family. MraY subfamily. The cofactor is Mg(2+).

It is found in the cell inner membrane. The catalysed reaction is UDP-N-acetyl-alpha-D-muramoyl-L-alanyl-gamma-D-glutamyl-meso-2,6-diaminopimeloyl-D-alanyl-D-alanine + di-trans,octa-cis-undecaprenyl phosphate = di-trans,octa-cis-undecaprenyl diphospho-N-acetyl-alpha-D-muramoyl-L-alanyl-D-glutamyl-meso-2,6-diaminopimeloyl-D-alanyl-D-alanine + UMP. It functions in the pathway cell wall biogenesis; peptidoglycan biosynthesis. Its function is as follows. Catalyzes the initial step of the lipid cycle reactions in the biosynthesis of the cell wall peptidoglycan: transfers peptidoglycan precursor phospho-MurNAc-pentapeptide from UDP-MurNAc-pentapeptide onto the lipid carrier undecaprenyl phosphate, yielding undecaprenyl-pyrophosphoryl-MurNAc-pentapeptide, known as lipid I. This Helicobacter pylori (strain Shi470) protein is Phospho-N-acetylmuramoyl-pentapeptide-transferase.